We begin with the raw amino-acid sequence, 275 residues long: Large ribosomal subunit protein uL2 (275 aa).

Disordered regions lie at residues 28–54 and 223–275; these read APHA…TRHI and VAMN…RNKK.

Belongs to the universal ribosomal protein uL2 family. Part of the 50S ribosomal subunit. Forms a bridge to the 30S subunit in the 70S ribosome.

Functionally, one of the primary rRNA binding proteins. Required for association of the 30S and 50S subunits to form the 70S ribosome, for tRNA binding and peptide bond formation. It has been suggested to have peptidyltransferase activity; this is somewhat controversial. Makes several contacts with the 16S rRNA in the 70S ribosome. The polypeptide is Large ribosomal subunit protein uL2 (Saccharophagus degradans (strain 2-40 / ATCC 43961 / DSM 17024)).